The chain runs to 932 residues: Isoleucine--tRNA ligase (932 aa).

The 'HIGH' region signature appears at 57–67; that stretch reads PYANGDIHIGT. Residue E559 participates in L-isoleucyl-5'-AMP binding. The 'KMSKS' region signature appears at 600-604; sequence KMSKS. K603 contributes to the ATP binding site. Residues C899, C902, C919, and C922 each contribute to the Zn(2+) site.

Belongs to the class-I aminoacyl-tRNA synthetase family. IleS type 1 subfamily. Monomer. Requires Zn(2+) as cofactor.

It localises to the cytoplasm. It catalyses the reaction tRNA(Ile) + L-isoleucine + ATP = L-isoleucyl-tRNA(Ile) + AMP + diphosphate. Functionally, catalyzes the attachment of isoleucine to tRNA(Ile). As IleRS can inadvertently accommodate and process structurally similar amino acids such as valine, to avoid such errors it has two additional distinct tRNA(Ile)-dependent editing activities. One activity is designated as 'pretransfer' editing and involves the hydrolysis of activated Val-AMP. The other activity is designated 'posttransfer' editing and involves deacylation of mischarged Val-tRNA(Ile). This chain is Isoleucine--tRNA ligase, found in Caldanaerobacter subterraneus subsp. tengcongensis (strain DSM 15242 / JCM 11007 / NBRC 100824 / MB4) (Thermoanaerobacter tengcongensis).